The sequence spans 754 residues: 5-methyltetrahydropteroyltriglutamate--homocysteine methyltransferase (754 aa).

5-methyltetrahydropteroyltri-L-glutamate is bound by residues 17–20 (RELK) and Lys117. Residues 431-433 (IGS) and Glu484 contribute to the L-homocysteine site. L-methionine contacts are provided by residues 431 to 433 (IGS) and Glu484. Residues 515-516 (RC) and Trp561 each bind 5-methyltetrahydropteroyltri-L-glutamate. Residue Asp599 participates in L-homocysteine binding. L-methionine is bound at residue Asp599. Glu605 serves as a coordination point for 5-methyltetrahydropteroyltri-L-glutamate. 3 residues coordinate Zn(2+): His641, Cys643, and Glu665. Catalysis depends on His694, which acts as the Proton donor. Residue Cys726 participates in Zn(2+) binding.

Belongs to the vitamin-B12 independent methionine synthase family. Requires Zn(2+) as cofactor.

The enzyme catalyses 5-methyltetrahydropteroyltri-L-glutamate + L-homocysteine = tetrahydropteroyltri-L-glutamate + L-methionine. It participates in amino-acid biosynthesis; L-methionine biosynthesis via de novo pathway; L-methionine from L-homocysteine (MetE route): step 1/1. Catalyzes the transfer of a methyl group from 5-methyltetrahydrofolate to homocysteine resulting in methionine formation. This Salmonella choleraesuis (strain SC-B67) protein is 5-methyltetrahydropteroyltriglutamate--homocysteine methyltransferase.